The primary structure comprises 319 residues: MENHSKNIKIFTGNSHPELAREIAKALNIPLGKAEVGTFSDGEISVNIKETVRGCDVFIVQSTCSPVNNNLMELLIMIDAFKRASAGRINAVIPYYGYARQDRKAKSRDPITAKLVADLLTAAGADRVLTMDLHAAQIQGYFNIPVDHLLGSPILAKYFVEKGLADRDDVVVVSPDLGSVTRARKFADKLNAPIAIIDKRRPKANVSEIMNIIGDVKDKVCILIDDMIDTAGTITNAANALKDLGAKNVYACCTHGVLSGPAFERINNSAIEELVMLNTIALPEGEGLNKFKSLSVAPIMADAINRIYDDEPLSGLFQD.

Residues 41–43 (DGE) and 100–101 (RQ) each bind ATP. Positions 134 and 176 each coordinate Mg(2+). The active site involves Lys-199. D-ribose 5-phosphate-binding positions include Arg-201, Asp-225, and 229–233 (DTAGT).

The protein belongs to the ribose-phosphate pyrophosphokinase family. Class I subfamily. In terms of assembly, homohexamer. Requires Mg(2+) as cofactor.

Its subcellular location is the cytoplasm. It carries out the reaction D-ribose 5-phosphate + ATP = 5-phospho-alpha-D-ribose 1-diphosphate + AMP + H(+). It functions in the pathway metabolic intermediate biosynthesis; 5-phospho-alpha-D-ribose 1-diphosphate biosynthesis; 5-phospho-alpha-D-ribose 1-diphosphate from D-ribose 5-phosphate (route I): step 1/1. Its function is as follows. Involved in the biosynthesis of the central metabolite phospho-alpha-D-ribosyl-1-pyrophosphate (PRPP) via the transfer of pyrophosphoryl group from ATP to 1-hydroxyl of ribose-5-phosphate (Rib-5-P). In Clostridium perfringens (strain 13 / Type A), this protein is Ribose-phosphate pyrophosphokinase.